The following is a 174-amino-acid chain: Large ribosomal subunit protein uL15 (174 aa).

Disordered regions lie at residues 1 to 57 (MKLH…QMRI) and 147 to 174 (PWVV…PQKA). Residues 21–35 (RGIGSGKGKTGGKGM) are compositionally biased toward gly residues.

It belongs to the universal ribosomal protein uL15 family. As to quaternary structure, part of the 50S ribosomal subunit.

Functionally, binds to the 23S rRNA. This Roseiflexus sp. (strain RS-1) protein is Large ribosomal subunit protein uL15.